The primary structure comprises 602 residues: Carbon catabolite repressor protein 4 homolog 1 (602 aa).

Residues 113 to 136 (ASAATEGNDEEELPRLNSSGSGSG) form a disordered region. Position 299 (E299) interacts with Mg(2+).

This sequence belongs to the CCR4/nocturin family. As to quaternary structure, component of the CCR4-NOT complex, at least composed of CRR4 and CAF1 proteins. Requires Mg(2+) as cofactor.

The protein localises to the nucleus. It is found in the cytoplasm. The catalysed reaction is Exonucleolytic cleavage of poly(A) to 5'-AMP.. Acts as a catalytic component of the CCR4-NOT core complex, which in the nucleus seems to be a general transcription factor, and in the cytoplasm the major mRNA deadenylase involved in mRNA turnover. The sequence is that of Carbon catabolite repressor protein 4 homolog 1 (CCR4-1) from Arabidopsis thaliana (Mouse-ear cress).